A 414-amino-acid chain; its full sequence is Esterase FrsA (414 aa).

This sequence belongs to the FrsA family.

It catalyses the reaction a carboxylic ester + H2O = an alcohol + a carboxylate + H(+). Functionally, catalyzes the hydrolysis of esters. The polypeptide is Esterase FrsA (Shigella dysenteriae serotype 1 (strain Sd197)).